The following is a 100-amino-acid chain: Large ribosomal subunit protein uL23 (100 aa).

Belongs to the universal ribosomal protein uL23 family. As to quaternary structure, part of the 50S ribosomal subunit. Contacts protein L29, and trigger factor when it is bound to the ribosome.

One of the early assembly proteins it binds 23S rRNA. One of the proteins that surrounds the polypeptide exit tunnel on the outside of the ribosome. Forms the main docking site for trigger factor binding to the ribosome. The protein is Large ribosomal subunit protein uL23 of Lacticaseibacillus casei (strain BL23) (Lactobacillus casei).